Here is a 437-residue protein sequence, read N- to C-terminus: GTPase Der (437 aa).

2 EngA-type G domains span residues 3-167 (NLVA…NKET) and 176-352 (PRFA…ENRT). GTP is bound by residues 9–16 (GRPNVGKS), 56–60 (DTGGW), 119–122 (NKTD), 182–189 (GRPNAGKS), 229–233 (DTAGI), and 294–297 (NKWD). A KH-like domain is found at 353–437 (TKIPTARLNE…TPINIYIRQK (85 aa)).

This sequence belongs to the TRAFAC class TrmE-Era-EngA-EngB-Septin-like GTPase superfamily. EngA (Der) GTPase family. As to quaternary structure, associates with the 50S ribosomal subunit.

Functionally, GTPase that plays an essential role in the late steps of ribosome biogenesis. This chain is GTPase Der, found in Bacteroides thetaiotaomicron (strain ATCC 29148 / DSM 2079 / JCM 5827 / CCUG 10774 / NCTC 10582 / VPI-5482 / E50).